Consider the following 61-residue polypeptide: Metallothionein-2B (61 aa).

Residue methionine 1 is modified to N-acetylmethionine. The beta stretch occupies residues 1–29 (MDPNCSCAAGGSCTCAGSCKCKDCRCTSC). Residues cysteine 5, cysteine 7, cysteine 13, cysteine 15, cysteine 19, cysteine 21, cysteine 24, cysteine 26, cysteine 29, cysteine 33, cysteine 34, cysteine 36, cysteine 37, cysteine 41, cysteine 44, cysteine 48, cysteine 50, cysteine 57, cysteine 59, and cysteine 60 each coordinate a divalent metal cation. The tract at residues 30–61 (KKSCCSCCPAGCARCAQGCICKGASDKCSCCA) is alpha.

Belongs to the metallothionein superfamily. Type 1 family. In terms of assembly, monomer.

Its function is as follows. Metallothioneins have a high content of cysteine residues that bind various heavy metals; these proteins are transcriptionally regulated by both heavy metals and glucocorticoids. This Sus scrofa (Pig) protein is Metallothionein-2B (MT2B).